The primary structure comprises 133 residues: Homeobox protein BarH-like 2 (133 aa).

The segment at residues 1 to 46 (ELEKEFQKQKYLSTPDRLDLAQSLGLTQLQVKTWYQNRRMKWKKMV) is a DNA-binding region (homeobox). The disordered stretch occupies residues 45–133 (MVLKGGQEAP…VTSPEPPPSS (89 aa)).

Belongs to the BAR homeobox family. In terms of tissue distribution, expressed in keratinizing epithelia such as wool follicle, tongue and esophagus. Expressed at low level in thymus. Not detected in spleen, skeletal muscle, brain, heart kidney, liver and lung.

It is found in the nucleus. In terms of biological role, transcription factor. Binds optimally to the DNA consensus sequence 5'-YYTAATGRTTTTY-3'. May control the expression of neural adhesion molecules such as L1 or Ng-CAM during embryonic development of both the central and peripherical nervous system. May be involved in controlling adhesive processes in keratinizing epithelia. The sequence is that of Homeobox protein BarH-like 2 (BARX2) from Ovis aries (Sheep).